A 400-amino-acid polypeptide reads, in one-letter code: Nicotinate phosphoribosyltransferase (400 aa).

A Phosphohistidine; by autocatalysis modification is found at His-220.

This sequence belongs to the NAPRTase family. In terms of processing, transiently phosphorylated on a His residue during the reaction cycle. Phosphorylation strongly increases the affinity for substrates and increases the rate of nicotinate D-ribonucleotide production. Dephosphorylation regenerates the low-affinity form of the enzyme, leading to product release.

The catalysed reaction is nicotinate + 5-phospho-alpha-D-ribose 1-diphosphate + ATP + H2O = nicotinate beta-D-ribonucleotide + ADP + phosphate + diphosphate. The protein operates within cofactor biosynthesis; NAD(+) biosynthesis; nicotinate D-ribonucleotide from nicotinate: step 1/1. Functionally, catalyzes the synthesis of beta-nicotinate D-ribonucleotide from nicotinate and 5-phospho-D-ribose 1-phosphate at the expense of ATP. The sequence is that of Nicotinate phosphoribosyltransferase from Salmonella choleraesuis (strain SC-B67).